Reading from the N-terminus, the 501-residue chain is Glucans biosynthesis protein G (501 aa).

The signal sequence occupies residues Met1–Ala25.

The protein belongs to the OpgD/OpgG family.

It is found in the periplasm. The protein operates within glycan metabolism; osmoregulated periplasmic glucan (OPG) biosynthesis. Its function is as follows. Involved in the biosynthesis of osmoregulated periplasmic glucans (OPGs). This is Glucans biosynthesis protein G from Rhodopseudomonas palustris (strain ATCC BAA-98 / CGA009).